The primary structure comprises 620 residues: Chaperone protein DnaK (620 aa).

Residue threonine 197 is modified to Phosphothreonine; by autocatalysis. Positions 591-620 are disordered; that stretch reads AQKLGEAMANKNNAEQPKKKDDDVIDAEVE.

Belongs to the heat shock protein 70 family.

Its function is as follows. Acts as a chaperone. This chain is Chaperone protein DnaK, found in Helicobacter pylori (strain HPAG1).